A 189-amino-acid chain; its full sequence is Large ribosomal subunit protein bL12c (189 aa).

Disordered stretches follow at residues 1 to 30 (MAATTTMATLNLPSLTSHPNSSTFPKHPQP) and 165 to 189 (EGVSKDDAEDAKKQLEDAGAKVSIV). The N-terminal 56 residues, 1-56 (MAATTTMATLNLPSLTSHPNSSTFPKHPQPLQFPFRTTTNPISLSSTRTTRLRPIA), are a transit peptide targeting the chloroplast. The segment covering 11 to 24 (NLPSLTSHPNSSTF) has biased composition (polar residues). Residues 165-183 (EGVSKDDAEDAKKQLEDAG) are compositionally biased toward basic and acidic residues.

In terms of assembly, component of the chloroplast large ribosomal subunit (LSU). Mature 70S chloroplast ribosomes of higher plants consist of a small (30S) and a large (50S) subunit. The 30S small subunit contains 1 molecule of ribosomal RNA (16S rRNA) and 24 different proteins. The 50S large subunit contains 3 rRNA molecules (23S, 5S and 4.5S rRNA) and 33 different proteins.

It localises to the plastid. The protein resides in the chloroplast. Its function is as follows. Component of the chloroplast ribosome (chloro-ribosome), a dedicated translation machinery responsible for the synthesis of chloroplast genome-encoded proteins, including proteins of the transcription and translation machinery and components of the photosynthetic apparatus. In Spinacia oleracea (Spinach), this protein is Large ribosomal subunit protein bL12c (RPL12).